The sequence spans 387 residues: Anhydro-N-acetylmuramic acid kinase (387 aa).

Residue 9 to 16 (GTSVDGID) coordinates ATP.

The protein belongs to the anhydro-N-acetylmuramic acid kinase family.

It catalyses the reaction 1,6-anhydro-N-acetyl-beta-muramate + ATP + H2O = N-acetyl-D-muramate 6-phosphate + ADP + H(+). It functions in the pathway amino-sugar metabolism; 1,6-anhydro-N-acetylmuramate degradation. It participates in cell wall biogenesis; peptidoglycan recycling. In terms of biological role, catalyzes the specific phosphorylation of 1,6-anhydro-N-acetylmuramic acid (anhMurNAc) with the simultaneous cleavage of the 1,6-anhydro ring, generating MurNAc-6-P. Is required for the utilization of anhMurNAc either imported from the medium or derived from its own cell wall murein, and thus plays a role in cell wall recycling. This is Anhydro-N-acetylmuramic acid kinase from Synechocystis sp. (strain ATCC 27184 / PCC 6803 / Kazusa).